We begin with the raw amino-acid sequence, 644 residues long: Exoribonuclease 2 (644 aa).

Residues Arg189–Lys516 enclose the RNB domain. An S1 motif domain is found at Asn561–Ala643.

This sequence belongs to the RNR ribonuclease family. RNase II subfamily.

It is found in the cytoplasm. It carries out the reaction Exonucleolytic cleavage in the 3'- to 5'-direction to yield nucleoside 5'-phosphates.. Involved in mRNA degradation. Hydrolyzes single-stranded polyribonucleotides processively in the 3' to 5' direction. In Salmonella dublin (strain CT_02021853), this protein is Exoribonuclease 2.